Consider the following 638-residue polypeptide: Sorting nexin-41 (638 aa).

A compositionally biased stretch (low complexity) spans methionine 1–proline 14. Residues methionine 1 to proline 69 are disordered. Over residues proline 15–arginine 30 the composition is skewed to pro residues. A PX domain is found at glycine 84–tryptophan 201. Residues arginine 118, serine 120, lysine 144, and arginine 168 each contribute to the a 1,2-diacyl-sn-glycero-3-phospho-(1D-myo-inositol-3-phosphate) site. 3 disordered regions span residues lysine 215–proline 239, leucine 408–alanine 432, and proline 545–leucine 638. The span at proline 225 to proline 239 shows a compositional bias: low complexity. A compositionally biased stretch (basic and acidic residues) spans glutamate 423–alanine 432. Residues glutamine 552–serine 562 show a composition bias toward low complexity. Residues methionine 585 to leucine 601 show a composition bias toward basic and acidic residues.

Belongs to the sorting nexin family.

The protein resides in the endosome membrane. It is found in the endomembrane system. In terms of biological role, may be required for cytoplasm to vacuole transport (Cvt) and pexophagy. This Cryptococcus neoformans var. neoformans serotype D (strain B-3501A) (Filobasidiella neoformans) protein is Sorting nexin-41 (SNX41).